Consider the following 536-residue polypeptide: CUGBP Elav-like family member 2 (536 aa).

RRM domains lie at 58-141 (IKMF…PADS), 150-230 (RKLF…FADT), and 451-529 (ANLF…LKRS).

It belongs to the CELF/BRUNOL family.

Its subcellular location is the nucleus. The protein localises to the cytoplasm. In terms of biological role, RNA-binding protein implicated in the regulation of several post-transcriptional events. May be involved in pre-mRNA alternative splicing, mRNA translation repression and stability. The protein is CUGBP Elav-like family member 2 (celf2) of Xenopus laevis (African clawed frog).